The following is a 226-amino-acid chain: Enolase-phosphatase E1 (226 aa).

The protein belongs to the HAD-like hydrolase superfamily. MasA/MtnC family. As to quaternary structure, monomer. It depends on Mg(2+) as a cofactor.

It carries out the reaction 5-methylsulfanyl-2,3-dioxopentyl phosphate + H2O = 1,2-dihydroxy-5-(methylsulfanyl)pent-1-en-3-one + phosphate. It participates in amino-acid biosynthesis; L-methionine biosynthesis via salvage pathway; L-methionine from S-methyl-5-thio-alpha-D-ribose 1-phosphate: step 3/6. The protein operates within amino-acid biosynthesis; L-methionine biosynthesis via salvage pathway; L-methionine from S-methyl-5-thio-alpha-D-ribose 1-phosphate: step 4/6. Bifunctional enzyme that catalyzes the enolization of 2,3-diketo-5-methylthiopentyl-1-phosphate (DK-MTP-1-P) into the intermediate 2-hydroxy-3-keto-5-methylthiopentenyl-1-phosphate (HK-MTPenyl-1-P), which is then dephosphorylated to form the acireductone 1,2-dihydroxy-3-keto-5-methylthiopentene (DHK-MTPene). The protein is Enolase-phosphatase E1 of Shewanella sp. (strain MR-4).